The sequence spans 217 residues: 3,4-dihydroxy-2-butanone 4-phosphate synthase (217 aa).

Residues 37–38 (RE), D42, 150–154 (RRGHT), and E174 each bind D-ribulose 5-phosphate. E38 contributes to the Mg(2+) binding site. Residue H153 participates in Mg(2+) binding.

Belongs to the DHBP synthase family. As to quaternary structure, homodimer. The cofactor is Mg(2+). Mn(2+) is required as a cofactor.

The catalysed reaction is D-ribulose 5-phosphate = (2S)-2-hydroxy-3-oxobutyl phosphate + formate + H(+). It functions in the pathway cofactor biosynthesis; riboflavin biosynthesis; 2-hydroxy-3-oxobutyl phosphate from D-ribulose 5-phosphate: step 1/1. Functionally, catalyzes the conversion of D-ribulose 5-phosphate to formate and 3,4-dihydroxy-2-butanone 4-phosphate. The polypeptide is 3,4-dihydroxy-2-butanone 4-phosphate synthase (Tolumonas auensis (strain DSM 9187 / NBRC 110442 / TA 4)).